The sequence spans 339 residues: Glycerol-3-phosphate dehydrogenase [NAD(P)+] (339 aa).

NADPH contacts are provided by S31, W32, R52, and K122. Sn-glycerol 3-phosphate-binding residues include K122 and G152. A156 lines the NADPH pocket. K207, D260, S270, R271, and N272 together coordinate sn-glycerol 3-phosphate. The Proton acceptor role is filled by K207. NADPH is bound at residue R271. Position 293 (E293) interacts with NADPH.

This sequence belongs to the NAD-dependent glycerol-3-phosphate dehydrogenase family.

It is found in the cytoplasm. It catalyses the reaction sn-glycerol 3-phosphate + NAD(+) = dihydroxyacetone phosphate + NADH + H(+). It carries out the reaction sn-glycerol 3-phosphate + NADP(+) = dihydroxyacetone phosphate + NADPH + H(+). Its pathway is membrane lipid metabolism; glycerophospholipid metabolism. In terms of biological role, catalyzes the reduction of the glycolytic intermediate dihydroxyacetone phosphate (DHAP) to sn-glycerol 3-phosphate (G3P), the key precursor for phospholipid synthesis. In Tropheryma whipplei (strain Twist) (Whipple's bacillus), this protein is Glycerol-3-phosphate dehydrogenase [NAD(P)+].